Reading from the N-terminus, the 534-residue chain is Nitrate/nitrite transporter NrtP (534 aa).

Helical transmembrane passes span Trp19 to Ile39, Thr52 to Leu72, Leu79 to Gln99, Leu109 to Phe129, Ala150 to Phe170, Ala195 to Val215, Asp240 to Trp260, Asn266 to Phe286, Trp382 to Thr404, Ile409 to Ile431, Gly445 to Leu465, and Gly485 to Leu505.

Belongs to the major facilitator superfamily. Nitrate/nitrite porter (TC 2.A.1.8) family.

The protein resides in the cell inner membrane. Functionally, high-efficiency transport system for both nitrate and nitrite. This chain is Nitrate/nitrite transporter NrtP, found in Picosynechococcus sp. (strain ATCC 27264 / PCC 7002 / PR-6) (Agmenellum quadruplicatum).